A 688-amino-acid chain; its full sequence is Ethylmalonyl-CoA mutase (688 aa).

The 130-residue stretch at 530–659 folds into the B12-binding domain; the sequence is TPRLVVGKPG…VGLAKVVERA (130 aa). H543 contacts adenosylcob(III)alamin. Residues 666-688 are disordered; sequence DRADTEAGVPGAPKRNESGAQVF.

Belongs to the methylmalonyl-CoA mutase family. The cofactor is adenosylcob(III)alamin.

It catalyses the reaction (2R)-ethylmalonyl-CoA = (2S)-methylsuccinyl-CoA. Functionally, radical enzyme that catalyzes the transformation of (2R)-ethylmalonyl-CoA to (2S)-methylsuccinyl-CoA. Is involved in the ethylmalonyl-CoA pathway for acetyl-CoA assimilation required for M.extorquens growth on one- and two-carbon compounds such as ethylamine, methanol or ethanol as sole carbon source. This enzyme acts as a regulatory metabolic control point in this pathway, that allows M.extorquens to efficiently restore metabolic balance when challenged with a sudden change in the growth substrate. The polypeptide is Ethylmalonyl-CoA mutase (Methylorubrum extorquens (strain ATCC 14718 / DSM 1338 / JCM 2805 / NCIMB 9133 / AM1) (Methylobacterium extorquens)).